The chain runs to 499 residues: Glycerol kinase (499 aa).

Threonine 13 contributes to the ADP binding site. Threonine 13, threonine 14, and serine 15 together coordinate ATP. Threonine 13 is a sn-glycerol 3-phosphate binding site. Residue arginine 17 participates in ADP binding. Sn-glycerol 3-phosphate-binding residues include arginine 83, glutamate 84, tyrosine 135, and aspartate 244. Glycerol contacts are provided by arginine 83, glutamate 84, tyrosine 135, aspartate 244, and glutamine 245. Residues threonine 266 and glycine 309 each contribute to the ADP site. ATP contacts are provided by threonine 266, glycine 309, glutamine 313, and glycine 410. Positions 410 and 414 each coordinate ADP.

Belongs to the FGGY kinase family.

It catalyses the reaction glycerol + ATP = sn-glycerol 3-phosphate + ADP + H(+). It functions in the pathway polyol metabolism; glycerol degradation via glycerol kinase pathway; sn-glycerol 3-phosphate from glycerol: step 1/1. With respect to regulation, inhibited by fructose 1,6-bisphosphate (FBP). In terms of biological role, key enzyme in the regulation of glycerol uptake and metabolism. Catalyzes the phosphorylation of glycerol to yield sn-glycerol 3-phosphate. The chain is Glycerol kinase from Paraburkholderia phymatum (strain DSM 17167 / CIP 108236 / LMG 21445 / STM815) (Burkholderia phymatum).